The following is a 438-amino-acid chain: Enolase (438 aa).

The substrate site is built by H159 and E168. E211 acts as the Proton donor in catalysis. The Mg(2+) site is built by D246, E297, and D322. Substrate contacts are provided by E297 and D322. K347 serves as the catalytic Proton acceptor. Substrate is bound by residues 374–377 (SHRS) and K398.

Belongs to the enolase family. As to quaternary structure, homodimer. It depends on Mg(2+) as a cofactor.

The protein resides in the cytoplasm. The catalysed reaction is (2R)-2-phosphoglycerate = phosphoenolpyruvate + H2O. It functions in the pathway carbohydrate degradation; glycolysis; pyruvate from D-glyceraldehyde 3-phosphate: step 4/5. This Cryphonectria parasitica (Chestnut blight fungus) protein is Enolase (ENO1).